The chain runs to 301 residues: MKIGILSQFPQLYSTQRLVAACESRGHEAVVINTLNCYMNINSIKPSIHYEGQELVGFDAIIPRIHASVTFYGCAVVRQFEMMGVFVANDSISIARSRDKLRALQLLSRKGIGMPITGFANKPNDIPDLINMVGGAPLVIKLLEGTQGIGVVLAETKTAAESVIEAFLGLKANILVQEYIKESNGSDIRCFVVGDKVVASMKRQGPEGDFRSNLHLGGCGETVKITSVERKMAIAAVKAMGLVVAGVDILRSNRGPLILEVNSAPGIEGIEQTTGISVTEPIVEYIEKMVAARKTNRPIIA.

Residues 104-287 (LQLLSRKGIG…VTEPIVEYIE (184 aa)) form the ATP-grasp domain. ATP-binding positions include lysine 141, 178-179 (EY), aspartate 187, and 211-213 (RSN). Aspartate 248, glutamate 260, and asparagine 262 together coordinate Mg(2+). Residues aspartate 248, glutamate 260, and asparagine 262 each contribute to the Mn(2+) site.

This sequence belongs to the RimK family. It depends on Mg(2+) as a cofactor. Mn(2+) serves as cofactor.

This Shewanella sp. (strain W3-18-1) protein is Probable alpha-L-glutamate ligase 1.